The sequence spans 659 residues: MSHKVLQIVLVLLLTLFSSTHNSNGNFLMEEAAAAGLNGYCLLTNTTKHSYGQAFNNTPVPIKNSSFSFNIIFGIVPEHKQQGSHGMAFVFSPTRGLPGASPDQYLGIFNETNNGKASNNVIAIELDIRKDEEFGDIDDNHVGININGLTSVASASAGYYDDEDGNFKKLSLISTKVMRLSIVYSHTDKQLNVTLLPAEISVPPQKSLLSLNRDLSPYFLEETYLGFTASTGSIGALYYVMQFSYEEGVIYPAWDLGVIPTLPPYPKKSYDRTRRILAVCLTLAVFTALVASGIGFVFYVRHKKVKEVLEEWEIQNGPHRFSYKELFNATKGFKEKQLLGKGGFGQVYKGMLPGSDAEIAVKRTSHDSRQGMSEFLAEISTIGRLRHPNLVRLLGYCKHKENLYLVYDFMPNGSLDRCLTRSNTNENQERLTWEQRFKIIKDVATALLHLHQEWVQVIVHRDIKPANVLLDHGMNARLGDFGLAKLYDQGFDPQTSRVAGTLGYIAPELLRTGRATTSTDVYAFGLVMLEVVCGRRLIERRAAENEAVLVDWILELWESGKLFDAAEESIRQEQNRGEIELVLKLGLLCAHHTELIRPNMSAVLQILNGVSHLPNNLLDVVRAERLRGIPETSMEVLLGLDLNSFGTMTLTNSFVSHGR.

Residues 1–25 (MSHKVLQIVLVLLLTLFSSTHNSNG) form the signal peptide. The interval 22 to 244 (NSNGNFLMEE…GALYYVMQFS (223 aa)) is legume-lectin like. The Extracellular portion of the chain corresponds to 26 to 275 (NFLMEEAAAA…PKKSYDRTRR (250 aa)). 4 N-linked (GlcNAc...) asparagine glycosylation sites follow: asparagine 45, asparagine 64, asparagine 110, and asparagine 192. Residues 276 to 296 (ILAVCLTLAVFTALVASGIGF) form a helical membrane-spanning segment. Over 297–659 (VFYVRHKKVK…LTNSFVSHGR (363 aa)) the chain is Cytoplasmic. Residues 333–595 (FKEKQLLGKG…GLLCAHHTEL (263 aa)) enclose the Protein kinase domain. ATP-binding positions include 339–347 (LGKGGFGQV) and lysine 362. Aspartate 462 acts as the Proton acceptor in catalysis.

This sequence in the C-terminal section; belongs to the protein kinase superfamily. Ser/Thr protein kinase family. In the N-terminal section; belongs to the leguminous lectin family.

It localises to the cell membrane. The catalysed reaction is L-seryl-[protein] + ATP = O-phospho-L-seryl-[protein] + ADP + H(+). It catalyses the reaction L-threonyl-[protein] + ATP = O-phospho-L-threonyl-[protein] + ADP + H(+). Involved in resistance response to the pathogenic oomycetes Phytophthora infestans and Phytophthora capsici and to the pathogenic bacteria Pseudomonas syringae. The sequence is that of L-type lectin-domain containing receptor kinase V.7 from Arabidopsis thaliana (Mouse-ear cress).